A 141-amino-acid chain; its full sequence is Hemoglobin subunit alpha (141 aa).

The region spanning 1-141 is the Globin domain; sequence VLSAADKANV…VSTVLTSKYR (141 aa). Ser3 is subject to Phosphoserine. Lys7 and Lys11 each carry N6-succinyllysine. N6-acetyllysine; alternate is present on Lys16. Lys16 carries the N6-succinyllysine; alternate modification. Position 40 is an N6-succinyllysine (Lys40). Position 49 is a phosphoserine (Ser49). His58 contacts O2. Residue His87 coordinates heme b. Ser102 carries the phosphoserine modification. Position 108 is a phosphothreonine (Thr108). At Ser124 the chain carries Phosphoserine. Thr134 and Thr137 each carry phosphothreonine. Ser138 is modified (phosphoserine).

This sequence belongs to the globin family. As to quaternary structure, heterotetramer of two alpha chains and two beta chains. In terms of tissue distribution, red blood cells.

Its function is as follows. Involved in oxygen transport from the lung to the various peripheral tissues. Functionally, hemopressin acts as an antagonist peptide of the cannabinoid receptor CNR1. Hemopressin-binding efficiently blocks cannabinoid receptor CNR1 and subsequent signaling. The protein is Hemoglobin subunit alpha (HBA) of Sus scrofa (Pig).